Here is a 424-residue protein sequence, read N- to C-terminus: Probable biofilm formation methyltransferase WspC (424 aa).

In terms of domain architecture, CheR-type methyltransferase spans 1–263 (MNEQRFFRFL…IAQSFAYVRH (263 aa)). S-adenosyl-L-methionine contacts are provided by residues Thr-68, Arg-72, Glu-109, Asp-133, 187-188 (NV), and 206-207 (RN). Residues 355–388 (AQVYYWLGLLSDTEGDAQQALSHYRKALYLEPQH) form a TPR repeat.

Monomer. The TPR repeat does not mediate self-association.

Involved in biofilm formation. This is Probable biofilm formation methyltransferase WspC (wspC) from Pseudomonas putida (strain ATCC 47054 / DSM 6125 / CFBP 8728 / NCIMB 11950 / KT2440).